The sequence spans 217 residues: Elongation factor Ts (217 aa).

Residues 82 to 85 (TDFV) form an involved in Mg(2+) ion dislocation from EF-Tu region.

This sequence belongs to the EF-Ts family.

The protein localises to the cytoplasm. Functionally, associates with the EF-Tu.GDP complex and induces the exchange of GDP to GTP. It remains bound to the aminoacyl-tRNA.EF-Tu.GTP complex up to the GTP hydrolysis stage on the ribosome. This is Elongation factor Ts from Synechococcus sp. (strain RCC307).